Consider the following 347-residue polypeptide: 4-hydroxy-3-methylbut-2-en-1-yl diphosphate synthase (flavodoxin) (347 aa).

Residues Cys259, Cys262, Cys294, and Glu301 each coordinate [4Fe-4S] cluster.

The protein belongs to the IspG family. It depends on [4Fe-4S] cluster as a cofactor.

It carries out the reaction (2E)-4-hydroxy-3-methylbut-2-enyl diphosphate + oxidized [flavodoxin] + H2O + 2 H(+) = 2-C-methyl-D-erythritol 2,4-cyclic diphosphate + reduced [flavodoxin]. The protein operates within isoprenoid biosynthesis; isopentenyl diphosphate biosynthesis via DXP pathway; isopentenyl diphosphate from 1-deoxy-D-xylulose 5-phosphate: step 5/6. Its function is as follows. Converts 2C-methyl-D-erythritol 2,4-cyclodiphosphate (ME-2,4cPP) into 1-hydroxy-2-methyl-2-(E)-butenyl 4-diphosphate. The chain is 4-hydroxy-3-methylbut-2-en-1-yl diphosphate synthase (flavodoxin) from Caldicellulosiruptor saccharolyticus (strain ATCC 43494 / DSM 8903 / Tp8T 6331).